A 154-amino-acid chain; its full sequence is Large ribosomal subunit protein uL13 (154 aa).

Belongs to the universal ribosomal protein uL13 family. Part of the 50S ribosomal subunit.

In terms of biological role, this protein is one of the early assembly proteins of the 50S ribosomal subunit, although it is not seen to bind rRNA by itself. It is important during the early stages of 50S assembly. This is Large ribosomal subunit protein uL13 from Rhodospirillum rubrum (strain ATCC 11170 / ATH 1.1.1 / DSM 467 / LMG 4362 / NCIMB 8255 / S1).